The chain runs to 110 residues: Large ribosomal subunit protein uL22 (110 aa).

It belongs to the universal ribosomal protein uL22 family. As to quaternary structure, part of the 50S ribosomal subunit.

In terms of biological role, this protein binds specifically to 23S rRNA; its binding is stimulated by other ribosomal proteins, e.g. L4, L17, and L20. It is important during the early stages of 50S assembly. It makes multiple contacts with different domains of the 23S rRNA in the assembled 50S subunit and ribosome. Functionally, the globular domain of the protein is located near the polypeptide exit tunnel on the outside of the subunit, while an extended beta-hairpin is found that lines the wall of the exit tunnel in the center of the 70S ribosome. This Shewanella baltica (strain OS223) protein is Large ribosomal subunit protein uL22.